Reading from the N-terminus, the 302-residue chain is Putative RING-H2 finger protein ATL35 (302 aa).

A signal peptide spans 1–31; that stretch reads MTIFARDLIYRIETKVLLPLFLVHLLPYVTC. Residues 50-70 traverse the membrane as a helical segment; that stretch reads TVIAIIVLAIFISLSMVACFL. Residues 123 to 165 form an RING-type; atypical zinc finger; it reads CAICLSEFVDKETLRWMPPCSHTFHANCIDVWLSSQSTCPACR. The residue at position 226 (S226) is a Phosphoserine.

This sequence belongs to the RING-type zinc finger family. ATL subfamily.

The protein resides in the membrane. It catalyses the reaction S-ubiquitinyl-[E2 ubiquitin-conjugating enzyme]-L-cysteine + [acceptor protein]-L-lysine = [E2 ubiquitin-conjugating enzyme]-L-cysteine + N(6)-ubiquitinyl-[acceptor protein]-L-lysine.. Its pathway is protein modification; protein ubiquitination. In Arabidopsis thaliana (Mouse-ear cress), this protein is Putative RING-H2 finger protein ATL35 (ATL35).